The sequence spans 418 residues: MPNPKKTVNWSHLWLYVSPPILGGIIGYFTNDIAIKMLFRPYRAIYIGGRRVPFTPGLIPRNQERLAKNISDTIMGSLLTPDELQKLARRLLKTERVQGAILWLLQLAIDQIKTDTDKKSAKIVAGILRDLIGESLPRLLKVLARREDFLEAQINQIFDQILLELQLSEEQASRLADWFLEVVLPPDVIRQAIVDFLTDRTIQIIDESFREKTSGTYWVVANLFGLRNTLTRLRTFCLDEKEATNNRLTELIQDLQMRDRFRKILQNLTLQNLPIGTVRQLRKTTRETVRQYVQTSGSDLLQGLTDSINWENIAELLLNRLSNSPVVISSLEVVSQELALILERYLEKDLEAIVAQVIPILSIDQVIVDRVKSTSPADLEAAIEGIVKNELQAIVSLGGILGLIVGLFQTAFFIFSQQ.

Helical transmembrane passes span 10 to 30 (WSHL…GYFT) and 394 to 414 (IVSL…AFFI).

This sequence belongs to the UPF0754 family.

It is found in the cell inner membrane. In Nostoc sp. (strain PCC 7120 / SAG 25.82 / UTEX 2576), this protein is UPF0754 membrane protein alr5253.